A 292-amino-acid chain; its full sequence is N-acetylneuraminate lyase (292 aa).

Residues serine 47 and threonine 48 each coordinate aceneuramate. The active-site Proton donor is the tyrosine 136. Lysine 164 (schiff-base intermediate with substrate) is an active-site residue. The aceneuramate site is built by threonine 166, glycine 188, aspartate 190, glutamate 191, and serine 207.

The protein belongs to the DapA family. NanA subfamily. As to quaternary structure, homotetramer.

It localises to the cytoplasm. It carries out the reaction aceneuramate = aldehydo-N-acetyl-D-mannosamine + pyruvate. It functions in the pathway amino-sugar metabolism; N-acetylneuraminate degradation; D-fructose 6-phosphate from N-acetylneuraminate: step 1/5. Catalyzes the reversible aldol cleavage of N-acetylneuraminic acid (sialic acid; Neu5Ac) to form pyruvate and N-acetylmannosamine (ManNAc) via a Schiff base intermediate. The polypeptide is N-acetylneuraminate lyase (Histophilus somni (strain 129Pt) (Haemophilus somnus)).